A 204-amino-acid chain; its full sequence is Tat proofreading chaperone DmsD (204 aa).

Belongs to the TorD/DmsD family. DmsD subfamily. Monomer in solution.

In terms of biological role, required for biogenesis/assembly of DMSO reductase, but not for the interaction of the DmsA signal peptide with the Tat system. May be part of a chaperone cascade complex that facilitates a folding-maturation pathway for the substrate protein. This is Tat proofreading chaperone DmsD from Salmonella typhimurium (strain LT2 / SGSC1412 / ATCC 700720).